Here is a 159-residue protein sequence, read N- to C-terminus: uncharacterized protein (159 aa).

A disordered region spans residues 9-36; the sequence is VTSGNKEKKKKRSSAGLTGHAPPAADSS.

This is an uncharacterized protein from Caenorhabditis elegans.